Reading from the N-terminus, the 211-residue chain is Putative F-box protein At1g52490 (211 aa).

In terms of domain architecture, F-box spans 12–59; the sequence is EEEYLQLPLDLIVEILKKLPLKSLVRFRCVSKQFSTIICSLRDFIESV.

In Arabidopsis thaliana (Mouse-ear cress), this protein is Putative F-box protein At1g52490.